A 55-amino-acid polypeptide reads, in one-letter code: Large ribosomal subunit protein bL33 (55 aa).

This sequence belongs to the bacterial ribosomal protein bL33 family.

The polypeptide is Large ribosomal subunit protein bL33 (Mesorhizobium japonicum (strain LMG 29417 / CECT 9101 / MAFF 303099) (Mesorhizobium loti (strain MAFF 303099))).